A 92-amino-acid polypeptide reads, in one-letter code: Probable Fe(2+)-trafficking protein (92 aa).

The protein belongs to the Fe(2+)-trafficking protein family.

Functionally, could be a mediator in iron transactions between iron acquisition and iron-requiring processes, such as synthesis and/or repair of Fe-S clusters in biosynthetic enzymes. This Shewanella frigidimarina (strain NCIMB 400) protein is Probable Fe(2+)-trafficking protein.